The sequence spans 189 residues: Peptidyl-tRNA hydrolase (189 aa).

Position 17 (Tyr17) interacts with tRNA. His22 acts as the Proton acceptor in catalysis. TRNA is bound by residues Phe65, Asn67, and Asn113.

The protein belongs to the PTH family. Monomer.

It localises to the cytoplasm. The catalysed reaction is an N-acyl-L-alpha-aminoacyl-tRNA + H2O = an N-acyl-L-amino acid + a tRNA + H(+). Its function is as follows. Hydrolyzes ribosome-free peptidyl-tRNAs (with 1 or more amino acids incorporated), which drop off the ribosome during protein synthesis, or as a result of ribosome stalling. In terms of biological role, catalyzes the release of premature peptidyl moieties from peptidyl-tRNA molecules trapped in stalled 50S ribosomal subunits, and thus maintains levels of free tRNAs and 50S ribosomes. The protein is Peptidyl-tRNA hydrolase of Mycoplasma genitalium (strain ATCC 33530 / DSM 19775 / NCTC 10195 / G37) (Mycoplasmoides genitalium).